A 673-amino-acid polypeptide reads, in one-letter code: FLYWCH-type zinc finger-containing protein 1 (673 aa).

The disordered stretch occupies residues 1-62 (MPLPEPSEQD…SSTATLPNNT (62 aa)). Serine 21 is modified (phosphoserine). Over residues 47–62 (VASQETSSTATLPNNT) the composition is skewed to polar residues. FLYWCH-type zinc fingers lie at residues 92–150 (FLKT…DHCH) and 235–293 (FLKT…SHCH). Lysine 110 is covalently cross-linked (Glycyl lysine isopeptide (Lys-Gly) (interchain with G-Cter in SUMO2)). Over residues 147-158 (DHCHPPEKEGLD) the composition is skewed to basic and acidic residues. Residues 147 to 178 (DHCHPPEKEGLDRKKRHRGRPPSSALPEGAEV) are disordered. 2 positions are modified to phosphoserine: serine 294 and serine 339. The tract at residues 351–402 (LSRSKSKSKSKSRSKSKSKSRSRSRKRAKKQQESSQEPPEEDQDVDPRGPEF) is disordered. The segment covering 354–379 (SKSKSKSKSRSKSKSKSRSRSRKRAK) has biased composition (basic residues). 3 FLYWCH-type zinc fingers span residues 402–460 (FLKT…SHCH), 490–548 (FLKT…RHCH), and 581–639 (FLRT…SHCH). The interval 646–673 (LEALRQREKAPSAAKKKKKKKKKKKGIH) is disordered. Positions 659–673 (AKKKKKKKKKKKGIH) are enriched in basic residues. A Glycyl lysine isopeptide (Lys-Gly) (interchain with G-Cter in SUMO2) cross-link involves residue lysine 666.

Interacts with CTNNB1 (when unphosphorylated), perhaps preventing interaction of CTNNB1 with TCF4, and thereby regulating transcription activation; phosphorylation of CTNNB1 may inhibit the interaction.

The protein resides in the nucleus. It is found in the chromosome. It localises to the centromere. In terms of biological role, transcription cofactor. Negatively regulates transcription activation by catenin beta-1 CTNNB1, perhaps acting by competing with TCF4 for CTNNB1 binding. May play a role in DNA-damage response signaling. Binds specifically to DNA sequences at peri-centromeric chromatin loci. This Mus musculus (Mouse) protein is FLYWCH-type zinc finger-containing protein 1 (Flywch1).